Here is a 288-residue protein sequence, read N- to C-terminus: 4-hydroxy-tetrahydrodipicolinate synthase (288 aa).

T43 serves as a coordination point for pyruvate. Y131 functions as the Proton donor/acceptor in the catalytic mechanism. Catalysis depends on K160, which acts as the Schiff-base intermediate with substrate. Position 200 (I200) interacts with pyruvate.

The protein belongs to the DapA family. In terms of assembly, homotetramer; dimer of dimers.

The protein localises to the cytoplasm. It catalyses the reaction L-aspartate 4-semialdehyde + pyruvate = (2S,4S)-4-hydroxy-2,3,4,5-tetrahydrodipicolinate + H2O + H(+). Its pathway is amino-acid biosynthesis; L-lysine biosynthesis via DAP pathway; (S)-tetrahydrodipicolinate from L-aspartate: step 3/4. Its function is as follows. Catalyzes the condensation of (S)-aspartate-beta-semialdehyde [(S)-ASA] and pyruvate to 4-hydroxy-tetrahydrodipicolinate (HTPA). The protein is 4-hydroxy-tetrahydrodipicolinate synthase of Methanococcus aeolicus (strain ATCC BAA-1280 / DSM 17508 / OCM 812 / Nankai-3).